The sequence spans 255 residues: NAD kinase (255 aa).

The Proton acceptor role is filled by Asp44. NAD(+) is bound by residues 44–45 (DG), His49, 114–115 (NE), Asp144, Ala152, 155–160 (SAYNLS), and Gln216.

The protein belongs to the NAD kinase family. It depends on a divalent metal cation as a cofactor.

The protein localises to the cytoplasm. It carries out the reaction NAD(+) + ATP = ADP + NADP(+) + H(+). Functionally, involved in the regulation of the intracellular balance of NAD and NADP, and is a key enzyme in the biosynthesis of NADP. Catalyzes specifically the phosphorylation on 2'-hydroxyl of the adenosine moiety of NAD to yield NADP. The protein is NAD kinase of Rickettsia typhi (strain ATCC VR-144 / Wilmington).